The chain runs to 490 residues: ATP synthase subunit beta, chloroplastic (490 aa).

170-177 provides a ligand contact to ATP; that stretch reads GGAGVGKT.

Belongs to the ATPase alpha/beta chains family. In terms of assembly, F-type ATPases have 2 components, CF(1) - the catalytic core - and CF(0) - the membrane proton channel. CF(1) has five subunits: alpha(3), beta(3), gamma(1), delta(1), epsilon(1). CF(0) has four main subunits: a(1), b(1), b'(1) and c(9-12).

It localises to the plastid. It is found in the chloroplast thylakoid membrane. The enzyme catalyses ATP + H2O + 4 H(+)(in) = ADP + phosphate + 5 H(+)(out). Its function is as follows. Produces ATP from ADP in the presence of a proton gradient across the membrane. The catalytic sites are hosted primarily by the beta subunits. This chain is ATP synthase subunit beta, chloroplastic, found in Pinus koraiensis (Korean pine).